The following is a 155-amino-acid chain: Cyanate hydratase (155 aa).

Residues Arg-101, Glu-104, and Ser-127 contribute to the active site.

Belongs to the cyanase family.

It carries out the reaction cyanate + hydrogencarbonate + 3 H(+) = NH4(+) + 2 CO2. Functionally, catalyzes the reaction of cyanate with bicarbonate to produce ammonia and carbon dioxide. In Coccidioides posadasii (strain C735) (Valley fever fungus), this protein is Cyanate hydratase.